Here is a 319-residue protein sequence, read N- to C-terminus: NADH-quinone oxidoreductase subunit H 2 (319 aa).

A run of 9 helical transmembrane segments spans residues 1–21, 77–97, 107–127, 147–167, 179–199, 214–234, 238–258, 262–282, and 293–313; these read MIGM…LLVL, ILAP…VAIG, VGLL…VLGA, LAYE…AGSF, VWFV…GIAA, LIAG…FLGE, VLLV…GPWL, VWFG…RATL, and FAWK…GIVV.

Belongs to the complex I subunit 1 family. NDH-1 is composed of 14 different subunits. Subunits NuoA, H, J, K, L, M, N constitute the membrane sector of the complex.

It is found in the cell inner membrane. The catalysed reaction is a quinone + NADH + 5 H(+)(in) = a quinol + NAD(+) + 4 H(+)(out). Functionally, NDH-1 shuttles electrons from NADH, via FMN and iron-sulfur (Fe-S) centers, to quinones in the respiratory chain. The immediate electron acceptor for the enzyme in this species is believed to be ubiquinone. Couples the redox reaction to proton translocation (for every two electrons transferred, four hydrogen ions are translocated across the cytoplasmic membrane), and thus conserves the redox energy in a proton gradient. This subunit may bind ubiquinone. The sequence is that of NADH-quinone oxidoreductase subunit H 2 from Rhodopseudomonas palustris (strain ATCC BAA-98 / CGA009).